Reading from the N-terminus, the 594-residue chain is Glutamate decarboxylase 1 (594 aa).

Low complexity predominate over residues 1–13 (MASSTPSSSATSS). The segment at 1-23 (MASSTPSSSATSSNAGADPNTTN) is disordered. Serine 78 bears the Phosphoserine mark. 190 to 192 (QLS) contributes to the 4-aminobutanoate binding site. Position 405 is an N6-(pyridoxal phosphate)lysine (lysine 405). 4-aminobutanoate is bound at residue arginine 567.

It belongs to the group II decarboxylase family. Homodimer. The cofactor is pyridoxal 5'-phosphate.

It catalyses the reaction L-glutamate + H(+) = 4-aminobutanoate + CO2. Functionally, catalyzes the synthesis of the inhibitory neurotransmitter gamma-aminobutyric acid (GABA) with pyridoxal 5'-phosphate as cofactor. The polypeptide is Glutamate decarboxylase 1 (GAD1) (Pan troglodytes (Chimpanzee)).